Here is a 55-residue protein sequence, read N- to C-terminus: ATP synthase protein 8 (55 aa).

The chain crosses the membrane as a helical span at residues Ile-7 to Leu-28.

This sequence belongs to the ATPase protein 8 family. In terms of assembly, F-type ATPases have 2 components, CF(1) - the catalytic core - and CF(0) - the membrane proton channel.

It localises to the mitochondrion membrane. In terms of biological role, mitochondrial membrane ATP synthase (F(1)F(0) ATP synthase or Complex V) produces ATP from ADP in the presence of a proton gradient across the membrane which is generated by electron transport complexes of the respiratory chain. F-type ATPases consist of two structural domains, F(1) - containing the extramembraneous catalytic core and F(0) - containing the membrane proton channel, linked together by a central stalk and a peripheral stalk. During catalysis, ATP synthesis in the catalytic domain of F(1) is coupled via a rotary mechanism of the central stalk subunits to proton translocation. Part of the complex F(0) domain. Minor subunit located with subunit a in the membrane. The protein is ATP synthase protein 8 (MT-ATP8) of Pisaster ochraceus (Ochre sea star).